The primary structure comprises 235 residues: MRLIPAVDLKSGKAVRLYEGDPARETPYGDPVEAALRFQEEGATLLHLVDLDRALGTGENREAVRRVAASLSIPFQLAGGIRSLEALQEALSLGASRAVVGTVAVKDPGLLARMLEAVGPDRLAVALDARGLEVVVSGWQEAASASALDLLRAWAEMGVRTLLYTDVRRDGTLLGLDREVVARVRAAWPHELIVGGGIASPEDLHLLQALGVDGALIGKALYEGRIRLKEAVWRS.

Aspartate 8 serves as the catalytic Proton acceptor. Aspartate 128 functions as the Proton donor in the catalytic mechanism.

It belongs to the HisA/HisF family.

The protein localises to the cytoplasm. It carries out the reaction 1-(5-phospho-beta-D-ribosyl)-5-[(5-phospho-beta-D-ribosylamino)methylideneamino]imidazole-4-carboxamide = 5-[(5-phospho-1-deoxy-D-ribulos-1-ylimino)methylamino]-1-(5-phospho-beta-D-ribosyl)imidazole-4-carboxamide. The protein operates within amino-acid biosynthesis; L-histidine biosynthesis; L-histidine from 5-phospho-alpha-D-ribose 1-diphosphate: step 4/9. This Thermus thermophilus (strain ATCC BAA-163 / DSM 7039 / HB27) protein is 1-(5-phosphoribosyl)-5-[(5-phosphoribosylamino)methylideneamino] imidazole-4-carboxamide isomerase.